We begin with the raw amino-acid sequence, 248 residues long: Small ribosomal subunit protein uS2 (248 aa).

The protein belongs to the universal ribosomal protein uS2 family.

In Leptothrix cholodnii (strain ATCC 51168 / LMG 8142 / SP-6) (Leptothrix discophora (strain SP-6)), this protein is Small ribosomal subunit protein uS2.